The following is a 308-amino-acid chain: Elongation factor Ts (308 aa).

The involved in Mg(2+) ion dislocation from EF-Tu stretch occupies residues 80-83 (TDFV).

The protein belongs to the EF-Ts family.

It is found in the cytoplasm. Its function is as follows. Associates with the EF-Tu.GDP complex and induces the exchange of GDP to GTP. It remains bound to the aminoacyl-tRNA.EF-Tu.GTP complex up to the GTP hydrolysis stage on the ribosome. This Rhodopseudomonas palustris (strain ATCC BAA-98 / CGA009) protein is Elongation factor Ts.